The sequence spans 1128 residues: Zinc finger protein 654 (1128 aa).

A disordered region spans residues 498–523; sequence GFDSLTDQSTGETDPDDVSGVQPKGH. 5 consecutive C2H2-type zinc fingers follow at residues 572–594, 746–771, 787–809, 815–839, and 844–868; these read FACVICGRKFRNRGLMQKHLKNH, FKCPALGCVRIFKRIGFLNKHAMTVH, GKCKFCQRQFEDSQHFIDHLNRH, YFCLHFNCNESFKLPFQLAQHTKSH, and AQCSFPECHELFEDLPLLYEHEAQH. The interval 891 to 951 is disordered; sequence DSNPNQEKDS…GNERSDDTVS (61 aa). Polar residues-rich tracts occupy residues 903-915 and 937-951; these read NEKQTISLPVSTS and SLVQNGNERSDDTVS. A phosphoserine mark is found at serine 1123 and serine 1127.

It belongs to the krueppel C2H2-type zinc-finger protein family.

It localises to the nucleus. Its function is as follows. May be involved in transcriptional regulation. This chain is Zinc finger protein 654, found in Homo sapiens (Human).